We begin with the raw amino-acid sequence, 837 residues long: Periplasmic nitrate reductase (837 aa).

The tat-type signal signal peptide spans 1 to 31 (MKLNRRDFIKANAAAAAISAAGLSVPGAAVA). The region spanning 37 to 93 (IRWDKAACRFCGTGCGVLVGTQDGRVVATQGDPDAPVNRGLNCIKGYFLSKIMYGAD) is the 4Fe-4S Mo/W bis-MGD-type domain. [4Fe-4S] cluster contacts are provided by C44, C47, C51, and C79. Residues K81, Q148, N173, C177, 210 to 217 (WGSNMAEM), 241 to 245 (STFEH), and 260 to 262 (QTD) each bind Mo-bis(molybdopterin guanine dinucleotide). A disordered region spans residues 308–329 (EKNATSNGYPDADGKPKGDTGK). A compositionally biased stretch (basic and acidic residues) spans 319–329 (ADGKPKGDTGK). Mo-bis(molybdopterin guanine dinucleotide)-binding positions include M381, Q385, N491, 517–518 (SD), K540, D567, and 727–736 (TGRVLEHWHT). A substrate-binding site is contributed by F803. 2 residues coordinate Mo-bis(molybdopterin guanine dinucleotide): N811 and K828.

This sequence belongs to the prokaryotic molybdopterin-containing oxidoreductase family. NasA/NapA/NarB subfamily. In terms of assembly, component of the periplasmic nitrate reductase NapAB complex composed of NapA and NapB. [4Fe-4S] cluster serves as cofactor. Requires Mo-bis(molybdopterin guanine dinucleotide) as cofactor. In terms of processing, predicted to be exported by the Tat system. The position of the signal peptide cleavage has not been experimentally proven.

It localises to the periplasm. It carries out the reaction 2 Fe(II)-[cytochrome] + nitrate + 2 H(+) = 2 Fe(III)-[cytochrome] + nitrite + H2O. Its function is as follows. Catalytic subunit of the periplasmic nitrate reductase complex NapAB. Receives electrons from NapB and catalyzes the reduction of nitrate to nitrite. In Dechloromonas aromatica (strain RCB), this protein is Periplasmic nitrate reductase.